A 665-amino-acid chain; its full sequence is Probable potassium transport system protein Kup (665 aa).

A compositionally biased stretch (low complexity) spans 1-18 (MASEAPHASAPDCAPASS). A disordered region spans residues 1-31 (MASEAPHASAPDCAPASSDIPQQDGGSTNGH). Helical transmembrane passes span 40–60 (FFAL…TSPL), 83–103 (VVSL…VVFI), 131–151 (LVFV…VITP), 171–191 (GVTN…LFFI), 202–222 (LFGP…LMNL), 245–265 (GLTG…VEAL), 281–301 (WLFF…AFAL), 332–352 (LVLL…TGAF), 380–400 (IFVP…MFTF), 409–429 (AYGL…FIVM), 435–455 (WSMP…ITFL), and 462–482 (FFSG…IMAT).

Belongs to the HAK/KUP transporter (TC 2.A.72) family.

The protein resides in the cell inner membrane. It carries out the reaction K(+)(in) + H(+)(in) = K(+)(out) + H(+)(out). Transport of potassium into the cell. Likely operates as a K(+):H(+) symporter. This Caulobacter vibrioides (strain ATCC 19089 / CIP 103742 / CB 15) (Caulobacter crescentus) protein is Probable potassium transport system protein Kup.